The chain runs to 159 residues: Succinate dehydrogenase [ubiquinone] cytochrome b small subunit, mitochondrial (159 aa).

The transit peptide at 1-36 (MATLWRLSVLCGARGGGALVLRTSVVRPAHVSAFLQ) directs the protein to the mitochondrion. At 37–63 (DRHTPGWCGVQHIHLSPSHQASSKAAS) the chain is on the mitochondrial matrix side. A helical membrane pass occupies residues 64-85 (LHWTGERVVSVLLLGLLPAAYL). At 86–90 (NPCSA) the chain is on the mitochondrial intermembrane side. The helical transmembrane segment at 91–111 (MDYSLAAALTLHGHWGIGQVV) threads the bilayer. Histidine 102 contributes to the heme b binding site. The Mitochondrial matrix segment spans residues 112-120 (TDYVRGDAL). Position 114 (tyrosine 114) interacts with a ubiquinone. A helical membrane pass occupies residues 121–142 (QKVAKAGLLALSAFTFAGLCYF). Residues 143–159 (NYHDVGICKAVAMLWKL) are Mitochondrial intermembrane-facing.

This sequence belongs to the CybS family. Component of complex II composed of four subunits: the flavoprotein (FP) SDHA, iron-sulfur protein (IP) SDHB, and a cytochrome b560 composed of SDHC and SDHD.

Its subcellular location is the mitochondrion inner membrane. The protein operates within carbohydrate metabolism; tricarboxylic acid cycle. Membrane-anchoring subunit of succinate dehydrogenase (SDH) that is involved in complex II of the mitochondrial electron transport chain and is responsible for transferring electrons from succinate to ubiquinone (coenzyme Q). SDH also oxidizes malate to the non-canonical enol form of oxaloacetate, enol-oxaloacetate. Enol-oxaloacetate, which is a potent inhibitor of the succinate dehydrogenase activity, is further isomerized into keto-oxaloacetate. The polypeptide is Succinate dehydrogenase [ubiquinone] cytochrome b small subunit, mitochondrial (SDHD) (Sus scrofa (Pig)).